A 219-amino-acid chain; its full sequence is Small ribosomal subunit protein eS1 (219 aa).

It belongs to the eukaryotic ribosomal protein eS1 family. In terms of assembly, component of the small ribosomal subunit. Mature ribosomes consist of a small (40S) and a large (60S) subunit. The 40S subunit contains about 33 different proteins and 1 molecule of RNA (18S). The 60S subunit contains about 49 different proteins and 3 molecules of RNA (25S, 5.8S and 5S).

It is found in the cytoplasm. This is Small ribosomal subunit protein eS1 from Guillardia theta (Cryptophyte).